The sequence spans 769 residues: Serine protease HtrA-like (769 aa).

The span at 1 to 20 (MDIGKKHVIPKSQYRRKRRE) shows a compositional bias: basic residues. Residues 1–390 (MDIGKKHVIP…ATSKLNKGRA (390 aa)) are disordered. 2 stretches are compositionally biased toward basic and acidic residues: residues 21-64 (FFHN…ERFK) and 71-108 (LEQR…DVSK). Over residues 126 to 137 (YEQNSEATLSTK) the composition is skewed to polar residues. A compositionally biased stretch (basic and acidic residues) spans 138-186 (STDKVESTEMRKLSSDKNKVGHEEQHVLSKPSEHDKETRIDSESSRTDS). The span at 247-262 (QQSQNEQTKTYTYGDS) shows a compositional bias: polar residues. Basic and acidic residues-rich tracts occupy residues 264–296 (QNDK…HIVD) and 310–330 (KTDD…HKQN). Positions 331–347 (ADSSETVGYQSQSTASH) are enriched in polar residues. Basic and acidic residues predominate over residues 348 to 364 (RSTEKRNISINDHDKLN). Residues 365–390 (GQKTNTKTSANNNQKKATSKLNKGRA) are compositionally biased toward polar residues. Residues 410–430 (LVILMGIIILIVILNAIFNNV) form a helical membrane-spanning segment. Active-site charge relay system residues include H504, D534, and S619. The PDZ domain occupies 680 to 733 (IASLNSFERQAVKLPGKVKNGVVVDQVDNNGLADQSGLKKGDVITELDGKLLED).

Belongs to the peptidase S1C family.

It is found in the cell membrane. This chain is Serine protease HtrA-like, found in Staphylococcus aureus (strain COL).